The primary structure comprises 234 residues: uncharacterized protein (234 aa).

7 helical membrane passes run 25–45, 57–77, 85–105, 108–128, 142–162, 163–183, and 203–223; these read LMGAGVLVSALVSWIMITFFL, LFFLVLWIIPLVMVVSLQGLA, LPIFIGYAAFMGFLISFTLLM, ATDITLAFVTAAAMFFGLSVY, AFGVAVWGLIIAMFLNFFFAS, TGLTILISLVGVVIFAGLIAW, and WAISMALSLYLDFINMFLFLL.

This sequence belongs to the BI1 family.

The protein localises to the cell membrane. This is an uncharacterized protein from Lactococcus lactis subsp. lactis (strain IL1403) (Streptococcus lactis).